A 356-amino-acid chain; its full sequence is Phosphoribosylformylglycinamidine cyclo-ligase (356 aa).

The protein belongs to the AIR synthase family.

The protein resides in the cytoplasm. It carries out the reaction 2-formamido-N(1)-(5-O-phospho-beta-D-ribosyl)acetamidine + ATP = 5-amino-1-(5-phospho-beta-D-ribosyl)imidazole + ADP + phosphate + H(+). It participates in purine metabolism; IMP biosynthesis via de novo pathway; 5-amino-1-(5-phospho-D-ribosyl)imidazole from N(2)-formyl-N(1)-(5-phospho-D-ribosyl)glycinamide: step 2/2. In Acinetobacter baumannii (strain AB307-0294), this protein is Phosphoribosylformylglycinamidine cyclo-ligase.